Consider the following 370-residue polypeptide: Homospermidine synthase (370 aa).

The protein belongs to the deoxyhypusine synthase family. As to quaternary structure, homotetramer. The cofactor is NAD(+).

It carries out the reaction putrescine + spermidine = sym-homospermidine + propane-1,3-diamine. The protein operates within alkaloid biosynthesis; pyrrolizidine alkaloid biosynthesis. In terms of biological role, catalyzes the transfer of an aminobutyl unit from spermidine onto putrescine. The resulting polyamine homospermidine is a precursor in the biosynthesis of pyrrolizidine alkaloids. The chain is Homospermidine synthase (HSS1) from Senecio vulgaris (Common groundsel).